Reading from the N-terminus, the 128-residue chain is Probable 4-amino-4-deoxy-L-arabinose-phosphoundecaprenol flippase subunit ArnF (128 aa).

At 1-2 the chain is on the cytoplasmic side; the sequence is MG. The helical transmembrane segment at 3-23 threads the bilayer; it reads LMWGLFSVIIASAAQLSMGFA. At 24–35 the chain is on the periplasmic side; the sequence is ASHLPPMTHLWD. The chain crosses the membrane as a helical span at residues 36 to 56; sequence FIAALLAFGLDARILLLGLLG. Residues 57 to 76 lie on the Cytoplasmic side of the membrane; the sequence is YLLSVFCWYKTLHKLALSKA. Residues 77–97 form a helical membrane-spanning segment; sequence YALLSMSYVLVWIASMVLPGW. Over 98–100 the chain is Periplasmic; the sequence is EGT. A helical transmembrane segment spans residues 101–121; that stretch reads FSLKALLGVACIMSGLMLIFL. Residues 122–128 are Cytoplasmic-facing; sequence PTTKQRY.

This sequence belongs to the ArnF family. As to quaternary structure, heterodimer of ArnE and ArnF.

It is found in the cell inner membrane. The protein operates within bacterial outer membrane biogenesis; lipopolysaccharide biosynthesis. Translocates 4-amino-4-deoxy-L-arabinose-phosphoundecaprenol (alpha-L-Ara4N-phosphoundecaprenol) from the cytoplasmic to the periplasmic side of the inner membrane. The chain is Probable 4-amino-4-deoxy-L-arabinose-phosphoundecaprenol flippase subunit ArnF from Escherichia coli O45:K1 (strain S88 / ExPEC).